The following is a 503-amino-acid chain: Probable protein kinase UbiB (503 aa).

The helical transmembrane segment at 13–35 threads the bilayer; it reads TFYRYRLAGLCASLMGSGWICAL. The region spanning 120-491 is the Protein kinase domain; that stretch reads EFETEPIASA…QQRQSLWLAV (372 aa). Residues 126–134 and lysine 148 contribute to the ATP site; that span reads IASASIAQV. Aspartate 283 (proton acceptor) is an active-site residue. The chain crosses the membrane as a helical span at residues 485 to 502; the sequence is QSLWLAVIAVVLLLILLL.

Belongs to the ABC1 family. UbiB subfamily.

The protein resides in the cell inner membrane. Its pathway is cofactor biosynthesis; ubiquinone biosynthesis [regulation]. Its function is as follows. Is probably a protein kinase regulator of UbiI activity which is involved in aerobic coenzyme Q (ubiquinone) biosynthesis. The sequence is that of Probable protein kinase UbiB from Neisseria meningitidis serogroup A / serotype 4A (strain DSM 15465 / Z2491).